A 408-amino-acid polypeptide reads, in one-letter code: D-galactonate dehydratase family member OG2516_05608 (408 aa).

Asp215 lines the Mg(2+) pocket. His217 lines the D-arabinonate pocket. Mg(2+) is bound by residues Glu241 and Glu267. Positions 267, 288, 317, and 344 each coordinate D-arabinonate.

It belongs to the mandelate racemase/muconate lactonizing enzyme family. GalD subfamily.

Functionally, has no detectable activity with D-mannonate and with a panel of 70 other acid sugars (in vitro), in spite of the conservation of the residues that are expected to be important for catalytic activity and cofactor binding. May have evolved a divergent function. The chain is D-galactonate dehydratase family member OG2516_05608 from Oceanicola granulosus (strain ATCC BAA-861 / DSM 15982 / KCTC 12143 / HTCC2516).